The chain runs to 89 residues: Acylphosphatase (89 aa).

Positions 3-88 (TLHLQIEGRV…GEYSGFEKRS (86 aa)) constitute an Acylphosphatase-like domain. Residues Arg18 and Asn36 contribute to the active site.

It belongs to the acylphosphatase family.

The enzyme catalyses an acyl phosphate + H2O = a carboxylate + phosphate + H(+). This Thiobacillus denitrificans (strain ATCC 25259 / T1) protein is Acylphosphatase (acyP).